The sequence spans 396 residues: Elongation factor Tu (396 aa).

Residues Lys-10–Glu-206 form the tr-type G domain. Positions Gly-19–Thr-26 are G1. Gly-19 to Thr-26 provides a ligand contact to GTP. Thr-26 serves as a coordination point for Mg(2+). The segment at Gly-60–Ser-64 is G2. The interval Asp-81–Gly-84 is G3. GTP-binding positions include Asp-81–His-85 and Asn-136–Asp-139. The G4 stretch occupies residues Asn-136–Asp-139. The G5 stretch occupies residues Ser-174–Leu-176.

The protein belongs to the TRAFAC class translation factor GTPase superfamily. Classic translation factor GTPase family. EF-Tu/EF-1A subfamily. As to quaternary structure, monomer.

It is found in the cytoplasm. The enzyme catalyses GTP + H2O = GDP + phosphate + H(+). GTP hydrolase that promotes the GTP-dependent binding of aminoacyl-tRNA to the A-site of ribosomes during protein biosynthesis. The sequence is that of Elongation factor Tu from Paramagnetospirillum magneticum (strain ATCC 700264 / AMB-1) (Magnetospirillum magneticum).